The primary structure comprises 118 residues: Large ribosomal subunit protein uL18 (118 aa).

Belongs to the universal ribosomal protein uL18 family. Part of the 50S ribosomal subunit; part of the 5S rRNA/L5/L18/L25 subcomplex. Contacts the 5S and 23S rRNAs.

This is one of the proteins that bind and probably mediate the attachment of the 5S RNA into the large ribosomal subunit, where it forms part of the central protuberance. In Acidobacterium capsulatum (strain ATCC 51196 / DSM 11244 / BCRC 80197 / JCM 7670 / NBRC 15755 / NCIMB 13165 / 161), this protein is Large ribosomal subunit protein uL18.